A 302-amino-acid chain; its full sequence is uncharacterized protein (302 aa).

Disordered regions lie at residues 81-100, 155-209, and 269-302; these read ETSD…ERAA, TVTG…PVNP, and LRIE…ALLN. Residues 196 to 209 are compositionally biased toward low complexity; that stretch reads PSLPSSLVSSPVNP.

This is an uncharacterized protein from Ictalurid herpesvirus 1 (strain Auburn) (IcHV-1).